Here is a 312-residue protein sequence, read N- to C-terminus: Olfactory receptor 4F15 (312 aa).

At 1–25 (MNGMNHSVVSEFVFMGLTNSREIQL) the chain is on the extracellular side. Asparagine 5 is a glycosylation site (N-linked (GlcNAc...) asparagine). A helical membrane pass occupies residues 26-49 (LLFVFSLLFYFASMMGNLVIVFTV). The Cytoplasmic portion of the chain corresponds to 50–57 (TMDAHLHS). A helical transmembrane segment spans residues 58–79 (PMYFLLANLSIIDMAFCSITAP). Over 80–100 (KMICDIFKKHKAISFRGCITQ) the chain is Extracellular. A disulfide bridge connects residues cysteine 97 and cysteine 189. A helical membrane pass occupies residues 101-120 (IFFSHALGGTEMVLLIAMAF). The Cytoplasmic portion of the chain corresponds to 121 to 139 (DRYMAICKPLHYLTIMSPR). The helical transmembrane segment at 140 to 158 (MCLYFLATSSIIGLIHSLV) threads the bilayer. Residues 159-195 (QLVFVVDLPFCGPNIFDSFYCDLPRLLRLACTNTQEL) are Extracellular-facing. The helical transmembrane segment at 196 to 219 (EFMVTVNSGLISVGSFVLLVISYI) threads the bilayer. Topologically, residues 220–235 (FILFTVWKHSSGGLAK) are cytoplasmic. The helical transmembrane segment at 236–258 (ALSTLSAHVTVVILFFGPLMFFY) threads the bilayer. The Extracellular portion of the chain corresponds to 259–269 (TWPSPTSHLDK). The chain crosses the membrane as a helical span at residues 270 to 289 (YLAIFDAFITPFLNPVIYTF). The Cytoplasmic segment spans residues 290–312 (RNKDMKVAMRRLCSRLAHFTKIL).

The protein belongs to the G-protein coupled receptor 1 family.

It is found in the cell membrane. Its function is as follows. Odorant receptor. This chain is Olfactory receptor 4F15 (OR4F15), found in Homo sapiens (Human).